The primary structure comprises 209 residues: MAEVQPTRMELIKLRRRIKMATRGHALLKMKRDGLIMEFRQLLEEAKEVIGGMVQKYEKAQSKLALAIAVDGIVAVRSIALSCCQIPPEFSMKRKNIMGVVVPVIKREPIRKKPTERGYGILSTSTRVDEAVEAYEELVDAVLEVAEIETTLRKLIEEIERTKRRVNALEYRVIPTMEELAKFISFKLEEMDRENIIRLKKLKMKKAKS.

The protein belongs to the V-ATPase D subunit family. Has multiple subunits with at least A(3), B(3), C, D, E, F, H, I and proteolipid K(x).

It localises to the cell membrane. Component of the A-type ATP synthase that produces ATP from ADP in the presence of a proton gradient across the membrane. In Archaeoglobus fulgidus (strain ATCC 49558 / DSM 4304 / JCM 9628 / NBRC 100126 / VC-16), this protein is A-type ATP synthase subunit D.